The chain runs to 231 residues: Ribonuclease 3 (231 aa).

Positions 12–139 constitute an RNase III domain; the sequence is LKAFLQKNNI…LIAAIYLDQG (128 aa). Glutamate 52 serves as a coordination point for Mg(2+). Aspartate 56 is an active-site residue. 2 residues coordinate Mg(2+): aspartate 125 and glutamate 128. Residue glutamate 128 is part of the active site. Positions 165-231 constitute a DRBM domain; the sequence is DPKSELQEYF…AANALSKLKT (67 aa).

This sequence belongs to the ribonuclease III family. As to quaternary structure, homodimer. Mg(2+) is required as a cofactor.

The protein resides in the cytoplasm. It catalyses the reaction Endonucleolytic cleavage to 5'-phosphomonoester.. Its function is as follows. Digests double-stranded RNA. Involved in the processing of primary rRNA transcript to yield the immediate precursors to the large and small rRNAs (23S and 16S). Processes some mRNAs, and tRNAs when they are encoded in the rRNA operon. Processes pre-crRNA and tracrRNA of type II CRISPR loci if present in the organism. In Mycoplasmopsis synoviae (strain 53) (Mycoplasma synoviae), this protein is Ribonuclease 3.